The chain runs to 270 residues: Acyl-[acyl-carrier-protein]--UDP-N-acetylglucosamine O-acyltransferase (270 aa).

Belongs to the transferase hexapeptide repeat family. LpxA subfamily. Homotrimer.

It is found in the cytoplasm. The catalysed reaction is a (3R)-hydroxyacyl-[ACP] + UDP-N-acetyl-alpha-D-glucosamine = a UDP-3-O-[(3R)-3-hydroxyacyl]-N-acetyl-alpha-D-glucosamine + holo-[ACP]. It functions in the pathway glycolipid biosynthesis; lipid IV(A) biosynthesis; lipid IV(A) from (3R)-3-hydroxytetradecanoyl-[acyl-carrier-protein] and UDP-N-acetyl-alpha-D-glucosamine: step 1/6. Involved in the biosynthesis of lipid A, a phosphorylated glycolipid that anchors the lipopolysaccharide to the outer membrane of the cell. In Helicobacter acinonychis (strain Sheeba), this protein is Acyl-[acyl-carrier-protein]--UDP-N-acetylglucosamine O-acyltransferase.